The primary structure comprises 197 residues: Cytochrome c biogenesis ATP-binding export protein CcmA (197 aa).

Residues 1-196 (MSMLSLHQLQ…VIKSAQILQL (196 aa)) form the ABC transporter domain. Residue 35–42 (GANGSGKS) participates in ATP binding.

This sequence belongs to the ABC transporter superfamily. CcmA exporter (TC 3.A.1.107) family. In terms of assembly, the complex is composed of two ATP-binding proteins (CcmA) and two transmembrane proteins (CcmB).

Its subcellular location is the cell inner membrane. The enzyme catalyses heme b(in) + ATP + H2O = heme b(out) + ADP + phosphate + H(+). Its function is as follows. Part of the ABC transporter complex CcmAB involved in the biogenesis of c-type cytochromes; once thought to export heme, this seems not to be the case, but its exact role is uncertain. Responsible for energy coupling to the transport system. This is Cytochrome c biogenesis ATP-binding export protein CcmA from Rickettsia typhi (strain ATCC VR-144 / Wilmington).